The chain runs to 784 residues: MEFITQNQAITSLSMINTDIDQPKASLRSRFLLHLIICLLFFVPPCSSQAWDGVVITQADYQGLQAVKQELIDPRGFLRSWNGSGFSACSGGWAGIKCAQGQVIVIQLPWKSLGGRISEKIGQLQALRKLSLHDNNLGGSIPMSLGLIPNLRGVQLFNNRLTGSIPASLGVSHFLQTLDLSNNLLSEIIPPNLADSSKLLRLNLSFNSLSGQIPVSLSRSSSLQFLALDHNNLSGPILDTWGSKSLNLRVLSLDHNSLSGPFPFSLCNLTQLQDFSFSHNRIRGTLPSELSKLTKLRKMDISGNSVSGHIPETLGNISSLIHLDLSQNKLTGEIPISISDLESLNFFNVSYNNLSGPVPTLLSQKFNSSSFVGNSLLCGYSVSTPCPTLPSPSPEKERKPSHRNLSTKDIILIASGALLIVMLILVCVLCCLLRKKANETKAKGGEAGPGAVAAKTEKGGEAEAGGETGGKLVHFDGPMAFTADDLLCATAEIMGKSTYGTVYKATLEDGSQVAVKRLREKITKSQKEFENEINVLGRIRHPNLLALRAYYLGPKGEKLVVFDYMSRGSLATFLHARGPDVHINWPTRMSLIKGMARGLFYLHTHANIIHGNLTSSNVLLDENITAKISDYGLSRLMTAAAGSSVIATAGALGYRAPELSKLKKANTKTDVYSLGVIILELLTGKSPSEALNGVDLPQWVATAVKEEWTNEVFDLELLNDVNTMGDEILNTLKLALHCVDATPSTRPEAQQVMTQLGEIRPEETTATTSEPLIDVPEASASTSQ.

Residues Met-1–Ser-48 form the signal peptide. Over Gln-49–Asp-409 the chain is Extracellular. Asn-82 carries N-linked (GlcNAc...) asparagine glycosylation. LRR repeat units follow at residues Ala-126–Ile-148, Asn-150–Ser-172, Phe-174–Ser-197, Lys-198–Ser-220, Ser-222–Gly-242, Asn-247–Asn-268, Gln-271–Thr-294, Lys-295–Ile-317, Ser-319–Glu-342, and Ser-343–Lys-365. 3 N-linked (GlcNAc...) asparagine glycosylation sites follow: Asn-203, Asn-232, and Asn-268. A glycan (N-linked (GlcNAc...) asparagine) is linked at Asn-316. N-linked (GlcNAc...) asparagine glycans are attached at residues Asn-348, Asn-353, Asn-367, and Asn-404. Residues Ile-410 to Cys-430 traverse the membrane as a helical segment. Residues Cys-431–Gln-784 are Cytoplasmic-facing. Residues Lys-441–Glu-467 are disordered. A Protein kinase domain is found at Cys-488–Ile-773. ATP contacts are provided by residues Met-494–Val-502 and Lys-516. Residues Arg-760–Gln-784 form a disordered region.

Belongs to the protein kinase superfamily. Ser/Thr protein kinase family. As to quaternary structure, interacts with AGL24. Autophosphorylated. Expressed in meristems, including roots, vegetative, inflorescence and floral meristems, and in embryos.

It localises to the cell membrane. The enzyme catalyses L-seryl-[protein] + ATP = O-phospho-L-seryl-[protein] + ADP + H(+). It carries out the reaction L-threonyl-[protein] + ATP = O-phospho-L-threonyl-[protein] + ADP + H(+). Its function is as follows. Can phosphorylate AGL24. This Arabidopsis thaliana (Mouse-ear cress) protein is Probable leucine-rich repeat receptor-like protein kinase IMK3 (IMK3).